The sequence spans 435 residues: MSKPEETSDPNPTGPDPSRSSSDEVTVTVADRAPSDLNHVSEELSDQLRNVGLDDSAKELSVPISVPQGNVETDSRALFGSDQKEEEEGSEKRMMMVYPVRPDSEDCSFYMRTGSCKYGSSCKFNHPVRRKLQIGRERVRERDEDVENPKLMECKYYFRTGGCKYGESCRFSHMKEHNSPASVPELNFLGLPIRPGEKECPFYMRNGSCKFGSDCKFNHPDPTAIGGVDSPLYRGNNGGSFSPKAPSQASSTSWSSTRHMNGTGTAPFIPSMFPHSRGVTPQASDWNGYQASSAYPPERSPLAPSSYQVNNSLAETSSFSQYQHQMSVEEFPERPDQPECTYYLKTGDCKFKYKCKYHHPKNRLPKQAAFSFNDKGLPLRPDQSMCTHYSRYGICKFGPACRFDHSIPPTFSPSSSQTVEARQVGANGNEDDSWH.

The disordered stretch occupies residues 1–91; sequence MSKPEETSDP…DQKEEEEGSE (91 aa). 3 consecutive C3H1-type zinc fingers follow at residues 101 to 129, 148 to 176, and 194 to 222; these read RPDSEDCSFYMRTGSCKYGSSCKFNHPVR, NPKLMECKYYFRTGGCKYGESCRFSHMKE, and RPGEKECPFYMRNGSCKFGSDCKFNHPDP. The segment at 235–274 is disordered; it reads GNNGGSFSPKAPSQASSTSWSSTRHMNGTGTAPFIPSMFP. Positions 247–256 are enriched in low complexity; it reads SQASSTSWSS. 2 consecutive C3H1-type zinc fingers follow at residues 334-362 and 380-408; these read RPDQPECTYYLKTGDCKFKYKCKYHHPKN and RPDQSMCTHYSRYGICKFGPACRFDHSIP. The segment at 412 to 435 is disordered; that stretch reads SPSSSQTVEARQVGANGNEDDSWH.

Its subcellular location is the nucleus. The polypeptide is Zinc finger CCCH domain-containing protein 67 (Arabidopsis thaliana (Mouse-ear cress)).